A 287-amino-acid polypeptide reads, in one-letter code: UPF0276 protein ACIAD0933 (287 aa).

The protein belongs to the UPF0276 family.

This Acinetobacter baylyi (strain ATCC 33305 / BD413 / ADP1) protein is UPF0276 protein ACIAD0933.